The following is a 170-amino-acid chain: Acetyl-CoA decarbonylase/synthase complex subunit epsilon 2 (170 aa).

It belongs to the CdhB family. Heterotetramer of two alpha and two epsilon subunits. The ACDS complex is made up of alpha, epsilon, beta, gamma and delta subunits with a probable stoichiometry of (alpha(2)epsilon(2))(4)-beta(8)-(gamma(1)delta(1))(8).

It participates in one-carbon metabolism; methanogenesis from acetate. Part of a complex that catalyzes the reversible cleavage of acetyl-CoA, allowing growth on acetate as sole source of carbon and energy. The alpha-epsilon subcomponent functions as a carbon monoxide dehydrogenase. The precise role of the epsilon subunit is unclear; it may have a stabilizing role within the alpha(2)epsilon(2) component and/or be involved in electron transfer to FAD during a potential FAD-mediated CO oxidation. The sequence is that of Acetyl-CoA decarbonylase/synthase complex subunit epsilon 2 (cdhB2) from Methanosarcina thermophila.